A 365-amino-acid chain; its full sequence is Putative F-box/kelch-repeat protein At3g16880 (365 aa).

Residues 1–47 form the F-box domain; it reads MTKMSKLPNDLLEEILSRSPLYSMRAIRLTCKKWNTLAKEESFTKKQ. 2 Kelch repeats span residues 98–149 and 155–205; these read RVYH…TKKS and ILSS…VKGN.

The chain is Putative F-box/kelch-repeat protein At3g16880 from Arabidopsis thaliana (Mouse-ear cress).